Reading from the N-terminus, the 278-residue chain is MSEQAKVGLGLRREMLDEFCDSTPDAIDFFEVAPENWMTLGGKFGRQFKQLTERKPFFCHGLSLSIGGPSPLDIQFVKDIKAFMDLHNISTYSEHLSYCSGTGHMYDLMPIPFTQEAVMHVVKRVKQVEDILERPLILENVSFYAAPGAEMTEFEFVNAVLSEADCRLLLDVNNIYVNSVNHHYDASQFLGSMPTERIAYLHIAGHYEEAEDLIVDTHGADIISPVWQLLRECYEIHGVHPTLLERDFNIPPTSELLNEIDQIHEYQHAVPSLLSRSA.

Belongs to the UPF0276 family.

This is UPF0276 protein Ssed_2857 from Shewanella sediminis (strain HAW-EB3).